Consider the following 291-residue polypeptide: Acetyl-coenzyme A carboxylase carboxyl transferase subunit beta (291 aa).

The 263-residue stretch at 29 to 291 (IMTKCPDCKK…TGGDLEWLEN (263 aa)) folds into the CoA carboxyltransferase N-terminal domain. Zn(2+)-binding residues include C33, C36, C52, and C55. Residues 33-55 (CPDCKKIMLTKELDKNLRVCMNC) form a C4-type zinc finger.

It belongs to the AccD/PCCB family. Acetyl-CoA carboxylase is a heterohexamer composed of biotin carboxyl carrier protein (AccB), biotin carboxylase (AccC) and two subunits each of ACCase subunit alpha (AccA) and ACCase subunit beta (AccD). Zn(2+) is required as a cofactor.

Its subcellular location is the cytoplasm. It carries out the reaction N(6)-carboxybiotinyl-L-lysyl-[protein] + acetyl-CoA = N(6)-biotinyl-L-lysyl-[protein] + malonyl-CoA. It participates in lipid metabolism; malonyl-CoA biosynthesis; malonyl-CoA from acetyl-CoA: step 1/1. In terms of biological role, component of the acetyl coenzyme A carboxylase (ACC) complex. Biotin carboxylase (BC) catalyzes the carboxylation of biotin on its carrier protein (BCCP) and then the CO(2) group is transferred by the transcarboxylase to acetyl-CoA to form malonyl-CoA. The sequence is that of Acetyl-coenzyme A carboxylase carboxyl transferase subunit beta from Bacillus licheniformis (strain ATCC 14580 / DSM 13 / JCM 2505 / CCUG 7422 / NBRC 12200 / NCIMB 9375 / NCTC 10341 / NRRL NRS-1264 / Gibson 46).